We begin with the raw amino-acid sequence, 354 residues long: ATPase GET3 (354 aa).

26 to 33 (KGGVGKTT) is an ATP binding site. The active site involves Asp57. ATP contacts are provided by Glu245 and Asn272. Zn(2+) contacts are provided by Cys285 and Cys288.

This sequence belongs to the arsA ATPase family. In terms of assembly, homodimer. Component of the Golgi to ER traffic (GET) complex, which is composed of GET1, GET2 and GET3. Within the complex, GET1 and GET2 form a heterotetramer which is stabilized by phosphatidylinositol binding and which binds to the GET3 homodimer. Interacts with the chloride channel protein GEF1.

Its subcellular location is the cytoplasm. The protein resides in the endoplasmic reticulum. It localises to the golgi apparatus. In terms of biological role, ATPase required for the post-translational delivery of tail-anchored (TA) proteins to the endoplasmic reticulum. Recognizes and selectively binds the transmembrane domain of TA proteins in the cytosol. This complex then targets to the endoplasmic reticulum by membrane-bound receptors GET1 and GET2, where the tail-anchored protein is released for insertion. This process is regulated by ATP binding and hydrolysis. ATP binding drives the homodimer towards the closed dimer state, facilitating recognition of newly synthesized TA membrane proteins. ATP hydrolysis is required for insertion. Subsequently, the homodimer reverts towards the open dimer state, lowering its affinity for the GET1-GET2 receptor, and returning it to the cytosol to initiate a new round of targeting. Cooperates with the HDEL receptor ERD2 to mediate the ATP-dependent retrieval of resident ER proteins that contain a C-terminal H-D-E-L retention signal from the Golgi to the ER. Involved in low-level resistance to the oxyanions arsenite and arsenate, and in heat tolerance. In Saccharomyces cerevisiae (strain RM11-1a) (Baker's yeast), this protein is ATPase GET3.